The chain runs to 290 residues: 4-hydroxybenzoate octaprenyltransferase (290 aa).

8 consecutive transmembrane segments (helical) span residues Ile-23 to Val-43, Leu-46 to Val-66, Leu-99 to Ile-119, Leu-141 to Val-161, Glu-163 to Tyr-183, Leu-213 to Asn-233, Gly-234 to Gln-254, and Ala-268 to Trp-288.

The protein belongs to the UbiA prenyltransferase family. Requires Mg(2+) as cofactor.

The protein localises to the cell inner membrane. It catalyses the reaction all-trans-octaprenyl diphosphate + 4-hydroxybenzoate = 4-hydroxy-3-(all-trans-octaprenyl)benzoate + diphosphate. The protein operates within cofactor biosynthesis; ubiquinone biosynthesis. Catalyzes the prenylation of para-hydroxybenzoate (PHB) with an all-trans polyprenyl group. Mediates the second step in the final reaction sequence of ubiquinone-8 (UQ-8) biosynthesis, which is the condensation of the polyisoprenoid side chain with PHB, generating the first membrane-bound Q intermediate 3-octaprenyl-4-hydroxybenzoate. The protein is 4-hydroxybenzoate octaprenyltransferase of Escherichia coli (strain SE11).